The primary structure comprises 180 residues: MIRRVLLLSLALLLAGCANEALFRPKPALESAADAPFSVSGRLSANLDGKGHVANFDWRHLPPRDEVAINSPLGNTVAKVLRDPGGVTLLADGKRWQADDVESLTRQVMGWPLPLSNLVWWIRGLPAPGVESRVDADGNLEQQGWHIRFIRDADVDSDHPKRVEMQREGLTVKVVVQSWQ.

The signal sequence occupies residues 1–16; the sequence is MIRRVLLLSLALLLAG. Cysteine 17 is lipidated: N-palmitoyl cysteine. A lipid anchor (S-diacylglycerol cysteine) is attached at cysteine 17.

Belongs to the LolB family. In terms of assembly, monomer.

It localises to the cell outer membrane. Its function is as follows. Plays a critical role in the incorporation of lipoproteins in the outer membrane after they are released by the LolA protein. This chain is Outer-membrane lipoprotein LolB, found in Chromobacterium violaceum (strain ATCC 12472 / DSM 30191 / JCM 1249 / CCUG 213 / NBRC 12614 / NCIMB 9131 / NCTC 9757 / MK).